The sequence spans 189 residues: MASKRALVILAKGAEEMETVIPVDVMRRAGIKVTVAGLAGKDPVQCSRDVVICPDASLEDAKKEGPYDVVVLPGGNLGAQNLSESAAVKEILKEQENRKGLIAAICAGPTALLAHEIGFGSKVTTHPLAKDKMMNGGHYTYSENRVEKDGLILTSRGPGTSFEFALAIVEALNGKEVAAQVKAPLVLKD.

Ala2 is subject to N-acetylalanine. S-palmitoyl cysteine attachment occurs at residues Cys46 and Cys53. At Tyr67 the chain carries Phosphotyrosine. The active-site Nucleophile is Cys106. Position 106 is a cysteine sulfinic acid (-SO2H); alternate (Cys106). Cys106 is lipidated: S-palmitoyl cysteine; alternate. His126 is a catalytic residue. A Glycyl lysine isopeptide (Lys-Gly) (interchain with G-Cter in SUMO) cross-link involves residue Lys130. Residue Lys148 is modified to N6-acetyllysine. Lys182 carries the N6-succinyllysine modification.

It belongs to the peptidase C56 family. Homodimer. Binds EFCAB6/DJBP and PIAS2. Part of a ternary complex containing PARK7, EFCAB6/DJBP and AR. Interacts (via N-terminus) with OTUD7B. Interacts with BBS1, HIPK1, CLCF1 and MTERF. Forms a complex with PINK1 and PRKN. Interacts (via C-terminus) with NCF1; the interaction is enhanced by LPS and modulates NCF1 phosphorylation and membrane translocation. Interacts with NENF. Deglycase activity does not require glutathione as a cofactor, however, glycated glutathione constitutes a PARK7 substrate. serves as cofactor. In terms of processing, sumoylated on Lys-130 by PIAS2 or PIAS4; which is enhanced after ultraviolet irradiation and essential for cell-growth promoting activity and transforming activity. Post-translationally, cys-106 is easily oxidized to sulfinic acid. Undergoes cleavage of a C-terminal peptide and subsequent activation of protease activity in response to oxidative stress. As to expression, highly expressed in pancreas, kidney, skeletal muscle, liver, testis and heart. Detected at slightly lower levels in placenta and brain (at protein level). Detected in astrocytes, Sertoli cells, spermatogonia, spermatids and spermatozoa. Expressed by pancreatic islets at higher levels than surrounding exocrine tissues.

Its subcellular location is the cell membrane. The protein resides in the cytoplasm. It is found in the nucleus. It localises to the membrane raft. The protein localises to the mitochondrion. Its subcellular location is the endoplasmic reticulum. The catalysed reaction is N(omega)-(1-hydroxy-2-oxopropyl)-L-arginyl-[protein] + H2O = lactate + L-arginyl-[protein] + H(+). It catalyses the reaction N(6)-(1-hydroxy-2-oxopropyl)-L-lysyl-[protein] + H2O = lactate + L-lysyl-[protein] + H(+). The enzyme catalyses S-(1-hydroxy-2-oxopropyl)-L-cysteinyl-[protein] + H2O = lactate + L-cysteinyl-[protein] + H(+). It carries out the reaction N(omega)-(1-hydroxy-2-oxoethyl)-L-arginyl-[protein] + H2O = L-arginyl-[protein] + glycolate + H(+). The catalysed reaction is N(6)-(1-hydroxy-2-oxoethyl)-L-lysyl-[protein] + H2O = glycolate + L-lysyl-[protein] + H(+). It catalyses the reaction S-(1-hydroxy-2-oxoethyl)-L-cysteinyl-[protein] + H2O = glycolate + L-cysteinyl-[protein] + H(+). The enzyme catalyses N(2)-(1-hydroxy-2-oxopropyl)-dGTP + H2O = lactate + dGTP + H(+). It carries out the reaction N(2)-(1-hydroxy-2-oxopropyl)-GTP + H2O = lactate + GTP + H(+). The catalysed reaction is N(2)-(1-hydroxy-2-oxopropyl)-GDP + H2O = lactate + GDP + H(+). It catalyses the reaction N(2)-(1-hydroxy-2-oxopropyl)-GMP + H2O = lactate + GMP + H(+). The enzyme catalyses N(2)-(1-hydroxy-2-oxoethyl)-dGTP + H2O = dGTP + glycolate + H(+). It carries out the reaction N(2)-(1-hydroxy-2-oxoethyl)-GTP + H2O = glycolate + GTP + H(+). The catalysed reaction is N(2)-(1-hydroxy-2-oxoethyl)-GDP + H2O = glycolate + GDP + H(+). It catalyses the reaction N(2)-(1-hydroxy-2-oxoethyl)-GMP + H2O = glycolate + GMP + H(+). The enzyme catalyses an N(2)-(1-hydroxy-2-oxopropyl)-guanosine in RNA + H2O = a guanosine in RNA + lactate + H(+). It carries out the reaction an N(2)-(1-hydroxy-2-oxopropyl)-2'-deoxyguanosine in DNA + H2O = a 2'-deoxyguanosine in DNA + lactate + H(+). The catalysed reaction is an N(2)-(1-hydroxy-2-oxoethyl)-guanosine in RNA + H2O = a guanosine in RNA + glycolate + H(+). It catalyses the reaction an N(2)-(1-hydroxy-2-oxoethyl)-2'-deoxyguanosine in DNA + H2O = a 2'-deoxyguanosine in DNA + glycolate + H(+). In terms of biological role, multifunctional protein with controversial molecular function which plays an important role in cell protection against oxidative stress and cell death acting as oxidative stress sensor and redox-sensitive chaperone and protease. It is involved in neuroprotective mechanisms like the stabilization of NFE2L2 and PINK1 proteins, male fertility as a positive regulator of androgen signaling pathway as well as cell growth and transformation through, for instance, the modulation of NF-kappa-B signaling pathway. Has been described as a protein and nucleotide deglycase that catalyzes the deglycation of the Maillard adducts formed between amino groups of proteins or nucleotides and reactive carbonyl groups of glyoxals. But this function is rebuted by other works. As a protein deglycase, repairs methylglyoxal- and glyoxal-glycated proteins, and releases repaired proteins and lactate or glycolate, respectively. Deglycates cysteine, arginine and lysine residues in proteins, and thus reactivates these proteins by reversing glycation by glyoxals. Acts on early glycation intermediates (hemithioacetals and aminocarbinols), preventing the formation of advanced glycation endproducts (AGE) that cause irreversible damage. Also functions as a nucleotide deglycase able to repair glycated guanine in the free nucleotide pool (GTP, GDP, GMP, dGTP) and in DNA and RNA. Is thus involved in a major nucleotide repair system named guanine glycation repair (GG repair), dedicated to reversing methylglyoxal and glyoxal damage via nucleotide sanitization and direct nucleic acid repair. Protects histones from adduction by methylglyoxal, controls the levels of methylglyoxal-derived argininine modifications on chromatin. Able to remove the glycations and restore histone 3, histone glycation disrupts both local and global chromatin architecture by altering histone-DNA interactions as well as histone acetylation and ubiquitination levels. Displays a very low glyoxalase activity that may reflect its deglycase activity. Eliminates hydrogen peroxide and protects cells against hydrogen peroxide-induced cell death. Required for correct mitochondrial morphology and function as well as for autophagy of dysfunctional mitochondria. Plays a role in regulating expression or stability of the mitochondrial uncoupling proteins SLC25A14 and SLC25A27 in dopaminergic neurons of the substantia nigra pars compacta and attenuates the oxidative stress induced by calcium entry into the neurons via L-type channels during pacemaking. Regulates astrocyte inflammatory responses, may modulate lipid rafts-dependent endocytosis in astrocytes and neuronal cells. In pancreatic islets, involved in the maintenance of mitochondrial reactive oxygen species (ROS) levels and glucose homeostasis in an age- and diet dependent manner. Protects pancreatic beta cells from cell death induced by inflammatory and cytotoxic setting. Binds to a number of mRNAs containing multiple copies of GG or CC motifs and partially inhibits their translation but dissociates following oxidative stress. Metal-binding protein able to bind copper as well as toxic mercury ions, enhances the cell protection mechanism against induced metal toxicity. In macrophages, interacts with the NADPH oxidase subunit NCF1 to direct NADPH oxidase-dependent ROS production, and protects against sepsis. The sequence is that of Parkinson disease protein 7 from Homo sapiens (Human).